We begin with the raw amino-acid sequence, 223 residues long: Ribonuclease 3 (223 aa).

Residues 4-127 (YSQLEKRLNY…IIGAVYLEAG (124 aa)) form the RNase III domain. A Mg(2+)-binding site is contributed by Glu-40. Residue Asp-44 is part of the active site. Residues Asn-113 and Glu-116 each coordinate Mg(2+). Glu-116 is an active-site residue. The region spanning 154–223 (DYKTALQELT…AKIALEALKK (70 aa)) is the DRBM domain.

It belongs to the ribonuclease III family. Homodimer. Mg(2+) is required as a cofactor.

The protein localises to the cytoplasm. It carries out the reaction Endonucleolytic cleavage to 5'-phosphomonoester.. Functionally, digests double-stranded RNA. Involved in the processing of primary rRNA transcript to yield the immediate precursors to the large and small rRNAs (23S and 16S). Processes some mRNAs, and tRNAs when they are encoded in the rRNA operon. Processes pre-crRNA and tracrRNA of type II CRISPR loci if present in the organism. The sequence is that of Ribonuclease 3 from Sulfurovum sp. (strain NBC37-1).